A 182-amino-acid chain; its full sequence is IQ domain-containing protein F1 (182 aa).

Composition is skewed to basic and acidic residues over residues 1 to 10 (MGEEQQKPEE) and 31 to 43 (ETEK…KQEL). The disordered stretch occupies residues 1 to 43 (MGEEQQKPEELNAPTDDAPQEKQQPADLSSETEKAKSKKKQEL). IQ domains lie at 45–74 (EKDQ…SAWI) and 101–130 (EQWA…AVRT).

Interacts with calmodulin. In terms of tissue distribution, specifically expressed in testes and mature spermatozoa (at protein level).

It is found in the cytoplasmic vesicle. The protein localises to the secretory vesicle. The protein resides in the acrosome. Involved in sperm capacitation and acrosome reaction. In Mus musculus (Mouse), this protein is IQ domain-containing protein F1.